Consider the following 450-residue polypeptide: Phosphoglucosamine mutase (450 aa).

Ser-102 (phosphoserine intermediate) is an active-site residue. Mg(2+) contacts are provided by Ser-102, Asp-242, Asp-244, and Asp-246. Ser-102 is modified (phosphoserine).

It belongs to the phosphohexose mutase family. Requires Mg(2+) as cofactor. In terms of processing, activated by phosphorylation.

The enzyme catalyses alpha-D-glucosamine 1-phosphate = D-glucosamine 6-phosphate. Functionally, catalyzes the conversion of glucosamine-6-phosphate to glucosamine-1-phosphate. The protein is Phosphoglucosamine mutase of Staphylococcus haemolyticus (strain JCSC1435).